Reading from the N-terminus, the 349-residue chain is uncharacterized protein (349 aa).

The next 10 membrane-spanning stretches (helical) occupy residues 15–35 (VHSPIYLALAVVIFSAANPVT), 53–73 (ISFCNVLFVGNLCALGLMILI), 91–111 (WFLLTVTAILSRAIAPGLMFS), 120–140 (NVVLIGRLEPVFTLILSILLL), 147–167 (LSMVATLISFVGVAVTVFWGV), 179–199 (FGLGESFVAIAAFISAITTIL), 218–238 (LLGTFVFFWIAVIIYGFDHFM), 248–268 (WMLIYGAIIVVVGQVAWLAGL), 276–296 (INLASLVTPILAIIFAYLILL), and 302–322 (AQYLGGILLLLGAILSFIDNL). EamA domains lie at 39–164 (IELG…VTVF) and 191–319 (FISA…LSFI).

This sequence belongs to the EamA transporter family.

Its subcellular location is the cell membrane. This is an uncharacterized protein from Synechocystis sp. (strain ATCC 27184 / PCC 6803 / Kazusa).